A 238-amino-acid polypeptide reads, in one-letter code: ATP synthase subunit a (238 aa).

5 helical membrane-spanning segments follow: residues 18–38, 75–95, 112–132, 179–199, and 203–223; these read LTIL…VFWA, YSLL…LGLM, NFGV…IEGI, VVTG…PLAF, and IVWT…FIIL.

This sequence belongs to the ATPase A chain family. In terms of assembly, F-type ATPases have 2 components, CF(1) - the catalytic core - and CF(0) - the membrane proton channel. CF(1) has five subunits: alpha(3), beta(3), gamma(1), delta(1), epsilon(1). CF(0) has three main subunits: a(1), b(2) and c(9-12). The alpha and beta chains form an alternating ring which encloses part of the gamma chain. CF(1) is attached to CF(0) by a central stalk formed by the gamma and epsilon chains, while a peripheral stalk is formed by the delta and b chains.

The protein resides in the cell membrane. In terms of biological role, key component of the proton channel; it plays a direct role in the translocation of protons across the membrane. The polypeptide is ATP synthase subunit a (Streptococcus agalactiae serotype Ia (strain ATCC 27591 / A909 / CDC SS700)).